The following is a 415-amino-acid chain: Dynein assembly factor with WD repeat domains 1 (415 aa).

WD repeat units lie at residues 90–129 (AHIL…ELHT), 132–174 (GHKN…HTFR), 175–214 (GHTA…EVVT), 217–256 (GHLA…KVHT), 259–298 (GHCA…YVAT), 301–340 (GHDD…CVTK), 343–384 (GHEG…QVLE), and 386–415 (HTDE…RIWR).

This sequence belongs to the WD repeat WDR69 family. As to quaternary structure, interacts with IFT46. In terms of tissue distribution, in early mouse embryos, expression is limited to distal, motile ciliated cells of the node.

It is found in the cytoplasm. It localises to the cytoskeleton. The protein resides in the flagellum basal body. The protein localises to the flagellum axoneme. Required for axonemal dynein assembly and ciliary motility in ciliated organs, including Kupffer's vesicle, during embryogenesis. Facilitates the onset of robust cilia motility during development. The protein is Dynein assembly factor with WD repeat domains 1 of Mus musculus (Mouse).